Consider the following 408-residue polypeptide: Na(+)/H(+) antiporter NhaA 2 (408 aa).

The next 11 membrane-spanning stretches (helical) occupy residues 36–56 (GILL…GLGV), 79–99 (ILLW…GLEI), 115–135 (ALPV…YFLF), 145–165 (GWGI…SLLG), 174–194 (IFLA…IAVF), 197–217 (SELH…LMVF), 225–245 (LFFY…SGIH), 281–301 (FIIM…SEML), 310–330 (LGII…MSWL), 348–368 (VLGL…IALL), and 381–401 (FAIL…LSSY).

Belongs to the NhaA Na(+)/H(+) (TC 2.A.33) antiporter family.

It localises to the cell inner membrane. The catalysed reaction is Na(+)(in) + 2 H(+)(out) = Na(+)(out) + 2 H(+)(in). Its function is as follows. Na(+)/H(+) antiporter that extrudes sodium in exchange for external protons. The sequence is that of Na(+)/H(+) antiporter NhaA 2 from Flavobacterium johnsoniae (strain ATCC 17061 / DSM 2064 / JCM 8514 / BCRC 14874 / CCUG 350202 / NBRC 14942 / NCIMB 11054 / UW101) (Cytophaga johnsonae).